Reading from the N-terminus, the 316-residue chain is L-lactate dehydrogenase (316 aa).

NAD(+) contacts are provided by residues Val-15, Asp-37, Lys-42, Tyr-68, and 82–83; that span reads GL. Residues Gln-85, Arg-91, and 123-126 contribute to the substrate site; that span reads NPVD. NAD(+) is bound by residues 121-123 and Thr-146; that span reads ASN. Position 151 to 154 (151 to 154) interacts with substrate; sequence DTSR. Residues Arg-156 and His-171 each coordinate beta-D-fructose 1,6-bisphosphate. The Proton acceptor role is filled by His-178. Tyr-222 bears the Phosphotyrosine mark. Thr-231 is a substrate binding site.

It belongs to the LDH/MDH superfamily. LDH family. In terms of assembly, homotetramer.

Its subcellular location is the cytoplasm. It carries out the reaction (S)-lactate + NAD(+) = pyruvate + NADH + H(+). It participates in fermentation; pyruvate fermentation to lactate; (S)-lactate from pyruvate: step 1/1. Its activity is regulated as follows. Allosterically activated by fructose 1,6-bisphosphate (FBP). Its function is as follows. Catalyzes the conversion of lactate to pyruvate. This Borreliella afzelii (strain PKo) (Borrelia afzelii) protein is L-lactate dehydrogenase.